The primary structure comprises 292 residues: Formamidopyrimidine-DNA glycosylase (292 aa).

Catalysis depends on Pro2, which acts as the Schiff-base intermediate with DNA. Glu3 functions as the Proton donor in the catalytic mechanism. Residue Lys58 is the Proton donor; for beta-elimination activity of the active site. His103, Arg122, and Lys165 together coordinate DNA. An FPG-type zinc finger spans residues 256–292 (RVYDRALHPCPTPGCKGEISRITQGGRSSFFCSMCQK). Catalysis depends on Arg282, which acts as the Proton donor; for delta-elimination activity.

It belongs to the FPG family. In terms of assembly, monomer. Zn(2+) is required as a cofactor.

It carries out the reaction Hydrolysis of DNA containing ring-opened 7-methylguanine residues, releasing 2,6-diamino-4-hydroxy-5-(N-methyl)formamidopyrimidine.. It catalyses the reaction 2'-deoxyribonucleotide-(2'-deoxyribose 5'-phosphate)-2'-deoxyribonucleotide-DNA = a 3'-end 2'-deoxyribonucleotide-(2,3-dehydro-2,3-deoxyribose 5'-phosphate)-DNA + a 5'-end 5'-phospho-2'-deoxyribonucleoside-DNA + H(+). In terms of biological role, involved in base excision repair of DNA damaged by oxidation or by mutagenic agents. Acts as a DNA glycosylase that recognizes and removes damaged bases. Has a preference for oxidized purines, such as 7,8-dihydro-8-oxoguanine (8-oxoG). Has AP (apurinic/apyrimidinic) lyase activity and introduces nicks in the DNA strand. Cleaves the DNA backbone by beta-delta elimination to generate a single-strand break at the site of the removed base with both 3'- and 5'-phosphates. This is Formamidopyrimidine-DNA glycosylase from Methylocella silvestris (strain DSM 15510 / CIP 108128 / LMG 27833 / NCIMB 13906 / BL2).